Consider the following 600-residue polypeptide: Alanine--tRNA ligase (600 aa).

Residues His463, His467, Cys565, and His569 each coordinate Zn(2+).

It belongs to the class-II aminoacyl-tRNA synthetase family. Zn(2+) is required as a cofactor.

The protein resides in the cytoplasm. It catalyses the reaction tRNA(Ala) + L-alanine + ATP = L-alanyl-tRNA(Ala) + AMP + diphosphate. Catalyzes the attachment of alanine to tRNA(Ala) in a two-step reaction: alanine is first activated by ATP to form Ala-AMP and then transferred to the acceptor end of tRNA(Ala). Also edits incorrectly charged Ser-tRNA(Ala) and Gly-tRNA(Ala) via its editing domain. This Treponema denticola (strain ATCC 35405 / DSM 14222 / CIP 103919 / JCM 8153 / KCTC 15104) protein is Alanine--tRNA ligase (alaS).